The sequence spans 147 residues: Ribosome maturation factor RimP (147 aa).

The protein belongs to the RimP family.

It localises to the cytoplasm. Functionally, required for maturation of 30S ribosomal subunits. The polypeptide is Ribosome maturation factor RimP (Legionella pneumophila (strain Lens)).